Consider the following 215-residue polypeptide: Small ribosomal subunit protein eS1 (215 aa).

The interval 195-215 (SGMQEPQKNEPAPGGEAIAQN) is disordered.

Belongs to the eukaryotic ribosomal protein eS1 family.

The chain is Small ribosomal subunit protein eS1 from Thermoplasma acidophilum (strain ATCC 25905 / DSM 1728 / JCM 9062 / NBRC 15155 / AMRC-C165).